The primary structure comprises 1218 residues: Chitin synthase 4 (1218 aa).

Disordered regions lie at residues 1–93 (MAEP…PERN) and 132–190 (TVSS…RRQK). Over residues 14–34 (TRDKSHSPYRESPSRRLRDVE) the composition is skewed to basic and acidic residues. A glycan (N-linked (GlcNAc...) asparagine) is linked at Asn50. 2 stretches are compositionally biased toward polar residues: residues 71 to 80 (SNPNPMSQSD) and 133 to 142 (VSSGSTQQDT). Basic and acidic residues predominate over residues 175–190 (RKDTRNLTEEEKRRQK). N-linked (GlcNAc...) asparagine glycosylation occurs at Asn180. 2 helical membrane-spanning segments follow: residues 200–220 (IWNIYCAVVTFWAPDCLLQCF) and 235–255 (VGLISIILLIAAFVGFLTFGF). Asn365, Asn404, and Asn426 each carry an N-linked (GlcNAc...) asparagine glycan. The helical transmembrane segment at 487 to 507 (VVLYVSLVFILAIVAAKFFLA) threads the bilayer. 2 disordered regions span residues 548 to 570 (PKITDPASTVTGSDGRTSKRGSM) and 582 to 606 (YAVDRRSSRPPPTTMTSQSSNAKLL). Polar residues predominate over residues 553–562 (PASTVTGSDG). Residues Asn617, Asn903, and Asn1030 are each glycosylated (N-linked (GlcNAc...) asparagine). Helical transmembrane passes span 1062 to 1082 (IGTLVLPAAISFTFYLIIISI), 1087 to 1107 (VPVIPLVLLALILGLPAILIV), and 1115 to 1135 (YILWMGIYLLSLPIWNFVLPA). The disordered stretch occupies residues 1188-1218 (QANGSVWNQQPPTRPPSGYGSMHGFEPYRDY). Residues 1189–1198 (ANGSVWNQQP) are compositionally biased toward polar residues. Residue Asn1190 is glycosylated (N-linked (GlcNAc...) asparagine).

It belongs to the chitin synthase family. Class IV subfamily. In terms of processing, maximal activity requires trypsin activation, suggesting a zymogenic nature.

It localises to the cell membrane. It carries out the reaction [(1-&gt;4)-N-acetyl-beta-D-glucosaminyl](n) + UDP-N-acetyl-alpha-D-glucosamine = [(1-&gt;4)-N-acetyl-beta-D-glucosaminyl](n+1) + UDP + H(+). With respect to regulation, activity is stimulated by Mg(2+), and is more inhibited by polyoxin D than by nikkomycin. Its function is as follows. Polymerizes chitin, a structural polymer of the cell wall and septum, by transferring the sugar moiety of UDP-GlcNAc to the non-reducing end of the growing chitin polymer. CHS4 synthesizes a large amount of chitin and appears to play a role in the process of cell separation. CHS4 is particularly well suited for functioning at the higher temperatures associated with its poorly characterized saprophic environment and with human infection. In Exophiala dermatitidis (strain ATCC 34100 / CBS 525.76 / NIH/UT8656) (Black yeast), this protein is Chitin synthase 4.